Reading from the N-terminus, the 511-residue chain is UPF0288 protein MK0796 (511 aa).

It belongs to the UPF0288 family.

This Methanopyrus kandleri (strain AV19 / DSM 6324 / JCM 9639 / NBRC 100938) protein is UPF0288 protein MK0796.